The following is a 237-amino-acid chain: Uridylate kinase (237 aa).

9–12 serves as a coordination point for ATP; it reads KFSG. Residues 17-22 form an involved in allosteric activation by GTP region; it reads GEAGYG. Gly-51 provides a ligand contact to UMP. The ATP site is built by Gly-52 and Arg-56. UMP-binding positions include Asp-72 and 133 to 140; that span reads TGNPFFTT. The ATP site is built by Thr-160, Tyr-166, and Asp-169.

The protein belongs to the UMP kinase family. Homohexamer.

It localises to the cytoplasm. It catalyses the reaction UMP + ATP = UDP + ADP. The protein operates within pyrimidine metabolism; CTP biosynthesis via de novo pathway; UDP from UMP (UMPK route): step 1/1. With respect to regulation, allosterically activated by GTP. Inhibited by UTP. Its function is as follows. Catalyzes the reversible phosphorylation of UMP to UDP. The chain is Uridylate kinase from Sulfurimonas denitrificans (strain ATCC 33889 / DSM 1251) (Thiomicrospira denitrificans (strain ATCC 33889 / DSM 1251)).